The chain runs to 156 residues: ATP synthase subunit b (156 aa).

Residues 11-31 (AIAFILFVWFCMKYVWPPLMA) traverse the membrane as a helical segment.

Belongs to the ATPase B chain family. As to quaternary structure, F-type ATPases have 2 components, F(1) - the catalytic core - and F(0) - the membrane proton channel. F(1) has five subunits: alpha(3), beta(3), gamma(1), delta(1), epsilon(1). F(0) has three main subunits: a(1), b(2) and c(10-14). The alpha and beta chains form an alternating ring which encloses part of the gamma chain. F(1) is attached to F(0) by a central stalk formed by the gamma and epsilon chains, while a peripheral stalk is formed by the delta and b chains.

It is found in the cell inner membrane. Its function is as follows. F(1)F(0) ATP synthase produces ATP from ADP in the presence of a proton or sodium gradient. F-type ATPases consist of two structural domains, F(1) containing the extramembraneous catalytic core and F(0) containing the membrane proton channel, linked together by a central stalk and a peripheral stalk. During catalysis, ATP synthesis in the catalytic domain of F(1) is coupled via a rotary mechanism of the central stalk subunits to proton translocation. Functionally, component of the F(0) channel, it forms part of the peripheral stalk, linking F(1) to F(0). The protein is ATP synthase subunit b of Enterobacter sp. (strain 638).